The sequence spans 492 residues: Histone-lysine N-methyltransferase SUVR4 (492 aa).

The tract at residues 112 to 138 is disordered; it reads ETRSASSGSSIQVVQKQPQLSNGDRKR. Residues 113–133 are compositionally biased toward polar residues; the sequence is TRSASSGSSIQVVQKQPQLSN. Positions 196, 197, 200, 204, 213, 281, 285, 287, and 291 each coordinate Zn(2+). The Pre-SET domain occupies 196–299; the sequence is CCANCKGNCL…QCGNRVVQRG (104 aa). The region spanning 302-435 is the SET domain; sequence CQLQVYFTQE…AMDELTWDYM (134 aa). Residues 313–315 and 391–392 contribute to the S-adenosyl-L-methionine site; these read KGW and NH. C394 serves as a coordination point for Zn(2+). S-adenosyl-L-methionine is bound at residue Y434. A Post-SET domain is found at 446–462; sequence KAFRCCCGSESCRDRKI. Zn(2+)-binding residues include C450, C452, and C457. The disordered stretch occupies residues 463–492; the sequence is KGSQGKSIERRKIVSAKKQQGSKEVSKKRK.

This sequence belongs to the class V-like SAM-binding methyltransferase superfamily. Histone-lysine methyltransferase family. As to quaternary structure, interacts with ubiquitin.

Its subcellular location is the nucleus. The protein resides in the chromosome. The catalysed reaction is N(6)-methyl-L-lysyl(9)-[histone H3] + S-adenosyl-L-methionine = N(6),N(6)-dimethyl-L-lysyl(9)-[histone H3] + S-adenosyl-L-homocysteine + H(+). It catalyses the reaction N(6),N(6)-dimethyl-L-lysyl(9)-[histone H3] + S-adenosyl-L-methionine = N(6),N(6),N(6)-trimethyl-L-lysyl(9)-[histone H3] + S-adenosyl-L-homocysteine + H(+). Its function is as follows. Histone methyltransferase that converts monomethylated 'Lys-9' of histone H3 (H3K9me1) to dimethylated 'Lys-9' (H3K9me2) in the absence of bound ubiquitin, and to trimethylated 'Lys-9' (H3K9me3) in the presence of bound ubiquitin. Acts in a locus-specific manner and contributes to the transcriptional silencing of pseudogenes and transposons. H3 'Lys-9' methylation represents a specific tag for epigenetic transcriptional repression. This chain is Histone-lysine N-methyltransferase SUVR4 (SUVR4), found in Arabidopsis thaliana (Mouse-ear cress).